The primary structure comprises 616 residues: Chaperone protein HscA (616 aa).

The protein belongs to the heat shock protein 70 family.

Chaperone involved in the maturation of iron-sulfur cluster-containing proteins. Has a low intrinsic ATPase activity which is markedly stimulated by HscB. Involved in the maturation of IscU. This chain is Chaperone protein HscA, found in Serratia proteamaculans (strain 568).